The following is a 247-amino-acid chain: tRNA (guanine-N(7)-)-methyltransferase (247 aa).

Residues Gly-70, Glu-93–Ile-94, Asn-128–Ala-129, and Leu-148 each bind S-adenosyl-L-methionine. Asp-151 is a catalytic residue. Residue Ser-226 to Glu-228 coordinates S-adenosyl-L-methionine.

The protein belongs to the class I-like SAM-binding methyltransferase superfamily. TrmB family.

Its subcellular location is the nucleus. It carries out the reaction guanosine(46) in tRNA + S-adenosyl-L-methionine = N(7)-methylguanosine(46) in tRNA + S-adenosyl-L-homocysteine. It functions in the pathway tRNA modification; N(7)-methylguanine-tRNA biosynthesis. In terms of biological role, catalyzes the formation of N(7)-methylguanine at position 46 (m7G46) in tRNA. The chain is tRNA (guanine-N(7)-)-methyltransferase from Drosophila pseudoobscura pseudoobscura (Fruit fly).